The primary structure comprises 505 residues: Flagellin (505 aa).

It belongs to the bacterial flagellin family.

Its subcellular location is the secreted. The protein resides in the bacterial flagellum. Functionally, flagellin is the subunit protein which polymerizes to form the filaments of bacterial flagella. The chain is Flagellin (fliC) from Salmonella montevideo.